Consider the following 495-residue polypeptide: ESX-2 secretion system ATPase EccB2 (495 aa).

The chain crosses the membrane as a helical span at residues 43–63 (LALSMVLVAIAAGWMMLLNVL).

This sequence belongs to the EccB family. Part of the ESX-2 / type VII secretion system (T7SS), which is composed of cytosolic and membrane components.

It localises to the cell membrane. Its function is as follows. An ATPase. The sequence is that of ESX-2 secretion system ATPase EccB2 (eccB2) from Mycobacterium tuberculosis (strain CDC 1551 / Oshkosh).